Consider the following 396-residue polypeptide: MSKLKLNPYFGEYGGMYVPQILVPALKQLETAFVEAQEDDDFKAEFTDLLKNYAGRPTALTLTRNLSPNPMVKIYLKREDLLHGGAHKTNQVLGQALLAKRMGKKEIIAETGAGQHGVATALACALLGLKCKVYMGAKDVARQSPNVFRMRLMGAEVIPVTSGSATLKDACNEAMRDWSGSYEKAHYLLGTAAGPHPFPTIVREFQRIIGEETKKQMLEREGRLPDAVIACVGGGSNAIGMFADFIDEPSVELIGVEPAGKGIDTPMHGAPLKHGKTGIFFGMKAPLMQDSEGQIEESYSISAGLDFPSVGPQHAHLNATGRARYESATDDEALEAFQQLARCEGIIPALESAHAIAYAVKMARECTKETILVVNLSGRGDKDIFTVSDILNGKEV.

Lysine 88 bears the N6-(pyridoxal phosphate)lysine mark.

Belongs to the TrpB family. As to quaternary structure, tetramer of two alpha and two beta chains. Requires pyridoxal 5'-phosphate as cofactor.

It catalyses the reaction (1S,2R)-1-C-(indol-3-yl)glycerol 3-phosphate + L-serine = D-glyceraldehyde 3-phosphate + L-tryptophan + H2O. It functions in the pathway amino-acid biosynthesis; L-tryptophan biosynthesis; L-tryptophan from chorismate: step 5/5. In terms of biological role, the beta subunit is responsible for the synthesis of L-tryptophan from indole and L-serine. The chain is Tryptophan synthase beta chain from Shewanella baltica (strain OS185).